A 482-amino-acid chain; its full sequence is Cardiolipin synthase (482 aa).

A run of 2 helical transmembrane segments spans residues 4–24 (LAYL…VTVF) and 34–54 (WAWL…YLIF). PLD phosphodiesterase domains lie at 217–244 (LNYR…GDEY) and 395–422 (DNGF…DFRS). Residues His222, Lys224, Asp229, His400, Lys402, and Asp407 contribute to the active site.

It belongs to the phospholipase D family. Cardiolipin synthase subfamily.

It localises to the cell membrane. It catalyses the reaction 2 a 1,2-diacyl-sn-glycero-3-phospho-(1'-sn-glycerol) = a cardiolipin + glycerol. In terms of biological role, catalyzes the reversible phosphatidyl group transfer from one phosphatidylglycerol molecule to another to form cardiolipin (CL) (diphosphatidylglycerol) and glycerol. The polypeptide is Cardiolipin synthase (cls) (Listeria monocytogenes serotype 4b (strain CLIP80459)).